The primary structure comprises 529 residues: Type I restriction enzyme StySPI methylase subunit (529 aa).

Residues 148 to 153 (QYFTPR), 178 to 180 (TAG), and Glu-216 each bind S-adenosyl-L-methionine. The disordered stretch occupies residues 424-443 (AEESEVADSEENKNADQHQA).

Belongs to the N(4)/N(6)-methyltransferase family. The type I restriction/modification system is composed of three polypeptides R, M and S; the restriction enzyme has stoichiometry R(2)M(2)S(1) while the methyltransferase is M(2)S(1).

The catalysed reaction is a 2'-deoxyadenosine in DNA + S-adenosyl-L-methionine = an N(6)-methyl-2'-deoxyadenosine in DNA + S-adenosyl-L-homocysteine + H(+). Its function is as follows. The subtype gamma methyltransferase (M) subunit of a type I restriction enzyme. The M and S subunits together form a methyltransferase (MTase) that methylates A-2 on the top strand and A-3 on the bottom strand of the sequence 5'-AACN(6)GTRC-3'. In the presence of the R subunit the complex can also act as an endonuclease, binding to the same target sequence but cutting the DNA some distance from this site. Whether the DNA is cut or modified depends on the methylation state of the target sequence. When the target site is unmodified, the DNA is cut. When the target site is hemimethylated, the complex acts as a maintenance MTase modifying the DNA so that both strands become methylated. After locating a non-methylated recognition site, the enzyme complex serves as a molecular motor that translocates DNA in an ATP-dependent manner until a collision occurs that triggers cleavage. The chain is Type I restriction enzyme StySPI methylase subunit from Salmonella potsdam.